The following is a 639-amino-acid chain: MTLEITGSELIKSKLIDAPERSGVYRMFDVNKQVLYVGKAKNLKKRLTNYIKSNLDNKTLRMIANTCFLEYSITNSEVEALLLEAQLIKKFQPKFNILLKDCKSFPFIKLRLDHDFPQLLKYRGKTLSDGKFFGPFASSAEVNTTLTELQKIFKLRSCTDNYFNSRTRPCLQYEIKRCYAPCVGKINKEDYRDLVTQVKDFLQGRTKELQENLSRKMEELSSQMRFEEAAEIRDRIKALSYVQLKAGVSDVVKDADIIAIVEKNGHYCVEVFLYRAGQACGNIPYFPTSTENSTKEEVLEYFLLQFYQKQHVPAAIIINHEINDKENVIEAIKKINNILQINITVPNKGGKAKLVQNAETNALFSLEQYLKKFAKNQEIMFEIKELFGLSEIPERIEIYDNSHIQGKFAVGVMVVAGKVGFDKKEYRVFNVHAPSLVCHSRESGDPKRLMDSCFRGNGIKNCGGDIKGDDYEMLRQVLTRRLTRLRQEPHKLPSLMIIDGGKGHLGVVKEVMDKFEMNIPFVCMSKGVDRNAGFEQFHVIGKEVFTLDKNLPVMKYLQILRDEAHNFAIKNHRLGRSRAIKISRLDDIEGVGETRKKALLHYFGSYKAVCDATIYELAKVNGINKLLAEMIFNVLHRKN.

Positions 20 to 97 (ERSGVYRMFD…IKKFQPKFNI (78 aa)) constitute a GIY-YIG domain. The UVR domain maps to 207-242 (KELQENLSRKMEELSSQMRFEEAAEIRDRIKALSYV).

The protein belongs to the UvrC family. In terms of assembly, interacts with UvrB in an incision complex.

Its subcellular location is the cytoplasm. The UvrABC repair system catalyzes the recognition and processing of DNA lesions. UvrC both incises the 5' and 3' sides of the lesion. The N-terminal half is responsible for the 3' incision and the C-terminal half is responsible for the 5' incision. In Rickettsia africae (strain ESF-5), this protein is UvrABC system protein C.